The chain runs to 196 residues: MPPPIGYCPAVGFGGRHERSNAELLAAHVAGDRYAFDQLFRRHHRQLHRLARLTSRTSEDADDALQDAMLSAHRGAGSFRYDAAVSSWLHRIVVNACLDRLRRAKAHPTAPLEDVYPVADRTAQVETAIAVQRALMRLPVEQRAAVVAVDMQGYSIADTARMLGVAEGTVKSRCARARARLARLLGYLNTGVNIRR.

Residues 39–105 form a sigma-70 factor domain-2 region; the sequence is LFRRHHRQLH…ACLDRLRRAK (67 aa). The short motif at 63–66 is the Interaction with polymerase core subunit RpoC element; sequence DALQ. The segment at 130–181 is sigma-70 factor domain-4; sequence AVQRALMRLPVEQRAAVVAVDMQGYSIADTARMLGVAEGTVKSRCARARARL. The segment at residues 156–175 is a DNA-binding region (H-T-H motif); sequence IADTARMLGVAEGTVKSRCA.

It belongs to the sigma-70 factor family. ECF subfamily. In terms of assembly, interacts transiently with the RNA polymerase catalytic core formed by RpoA, RpoB, RpoC and RpoZ (2 alpha, 1 beta, 1 beta' and 1 omega subunit) to form the RNA polymerase holoenzyme that can initiate transcription. Interacts (via sigma-70 factor domain 4) with anti-sigma-M factor RsmA.

In terms of biological role, sigma factors are initiation factors that promote the attachment of RNA polymerase to specific initiation sites and are then released. Extracytoplasmic function (ECF) sigma factors are held in an inactive form by an anti-sigma factor until released by regulated intramembrane proteolysis. The chain is ECF RNA polymerase sigma factor SigM (sigM) from Mycobacterium tuberculosis (strain ATCC 35801 / TMC 107 / Erdman).